Here is a 187-residue protein sequence, read N- to C-terminus: Avirulence protein ATR39-2 (187 aa).

Positions 1–20 (MVKCTPLLALTVIVSAGSDA) are cleaved as a signal peptide. The RxLR-dEER signature appears at 49–66 (RVLRASDVPNEVAAGESR).

The protein belongs to the RxLR effector family.

The protein localises to the secreted. Its subcellular location is the host cell. Secreted effector that acts as an elicitor of hypersensitive response (HR) specifically on plants carrying defense protein RPP39. The allele ATR39-1 is recognized by RPP39, whereas the ATR39-2 allele is nor recognized. This chain is Avirulence protein ATR39-2, found in Hyaloperonospora arabidopsidis (strain Emoy2) (Downy mildew agent).